The primary structure comprises 238 residues: Sugar fermentation stimulation protein homolog (238 aa).

Belongs to the SfsA family.

This chain is Sugar fermentation stimulation protein homolog, found in Alteromonas mediterranea (strain DSM 17117 / CIP 110805 / LMG 28347 / Deep ecotype).